A 241-amino-acid polypeptide reads, in one-letter code: Octanoyltransferase (241 aa).

The region spanning alanine 43–proline 228 is the BPL/LPL catalytic domain. Substrate is bound by residues arginine 83–histidine 90, alanine 159–glycine 161, and glycine 172–serine 174. Cysteine 190 serves as the catalytic Acyl-thioester intermediate.

It belongs to the LipB family.

It is found in the cytoplasm. It carries out the reaction octanoyl-[ACP] + L-lysyl-[protein] = N(6)-octanoyl-L-lysyl-[protein] + holo-[ACP] + H(+). The protein operates within protein modification; protein lipoylation via endogenous pathway; protein N(6)-(lipoyl)lysine from octanoyl-[acyl-carrier-protein]: step 1/2. Functionally, catalyzes the transfer of endogenously produced octanoic acid from octanoyl-acyl-carrier-protein onto the lipoyl domains of lipoate-dependent enzymes. Lipoyl-ACP can also act as a substrate although octanoyl-ACP is likely to be the physiological substrate. The chain is Octanoyltransferase from Paraburkholderia phytofirmans (strain DSM 17436 / LMG 22146 / PsJN) (Burkholderia phytofirmans).